Consider the following 763-residue polypeptide: Glycerophosphodiester phosphodiesterase GDPDL1 (763 aa).

A signal peptide spans 1–35 (MNSRPSNPTKLVIRSSTLLFCGVVLIHLFAAQIDA). The Extracellular portion of the chain corresponds to 36-744 (QRSTSRWQTL…STIAQAPSGQ (709 aa)). The GP-PDE 1 domain occupies 50–350 (PLVIARGGFS…DFPITASAAV (301 aa)). Residues asparagine 105, asparagine 192, asparagine 248, asparagine 257, asparagine 315, asparagine 359, asparagine 430, asparagine 534, asparagine 547, and asparagine 654 are each glycosylated (N-linked (GlcNAc...) asparagine). Residues 366-668 (FLVISKDGAS…EFPFTAARYK (303 aa)) enclose the GP-PDE 2 domain. The helical transmembrane segment at 745-762 (TRLKLSLLLSVFFLSLLL) threads the bilayer. Residue leucine 763 is a topological domain, cytoplasmic.

This sequence belongs to the glycerophosphoryl diester phosphodiesterase family. Ca(2+) serves as cofactor. Expressed in rosette and cauline leaves, stems, flowers and siliques.

The protein resides in the cell membrane. The enzyme catalyses a sn-glycero-3-phosphodiester + H2O = an alcohol + sn-glycerol 3-phosphate + H(+). Its function is as follows. Hydrolyzes glycerolphosphoglycerol, glycerophosphocholine and glycerophosphoethanolamine in vitro. This Arabidopsis thaliana (Mouse-ear cress) protein is Glycerophosphodiester phosphodiesterase GDPDL1.